A 349-amino-acid chain; its full sequence is Phosphate acetyltransferase (349 aa).

Belongs to the phosphate acetyltransferase and butyryltransferase family.

The protein resides in the cytoplasm. The catalysed reaction is acetyl-CoA + phosphate = acetyl phosphate + CoA. It participates in metabolic intermediate biosynthesis; acetyl-CoA biosynthesis; acetyl-CoA from acetate: step 2/2. In Rickettsia typhi (strain ATCC VR-144 / Wilmington), this protein is Phosphate acetyltransferase (pta).